Reading from the N-terminus, the 409-residue chain is Serine/threonine transporter SstT (409 aa).

Transmembrane regions (helical) follow at residues 24-44 (LALG…AGLF), 48-68 (FVGA…AATI), 82-102 (IIVL…IAGM), 142-162 (AIAN…GAAL), 194-214 (LGIF…ALAG), 218-238 (LLAV…PAIV), 292-312 (IPLG…VLAM), 319-339 (GIQV…VSAC), and 365-385 (VAMQ…SAET).

This sequence belongs to the dicarboxylate/amino acid:cation symporter (DAACS) (TC 2.A.23) family.

Its subcellular location is the cell inner membrane. The catalysed reaction is L-serine(in) + Na(+)(in) = L-serine(out) + Na(+)(out). It carries out the reaction L-threonine(in) + Na(+)(in) = L-threonine(out) + Na(+)(out). In terms of biological role, involved in the import of serine and threonine into the cell, with the concomitant import of sodium (symport system). The sequence is that of Serine/threonine transporter SstT from Neisseria meningitidis serogroup C / serotype 2a (strain ATCC 700532 / DSM 15464 / FAM18).